The sequence spans 207 residues: Large ribosomal subunit protein uL4 (207 aa).

The segment at 44 to 77 is disordered; the sequence is LRQGTHKTKGRSEVRGGGRKPWRQKGTGRARQGS. The segment covering 60–71 has biased composition (basic residues); it reads GGRKPWRQKGTG.

Belongs to the universal ribosomal protein uL4 family. As to quaternary structure, part of the 50S ribosomal subunit.

Functionally, one of the primary rRNA binding proteins, this protein initially binds near the 5'-end of the 23S rRNA. It is important during the early stages of 50S assembly. It makes multiple contacts with different domains of the 23S rRNA in the assembled 50S subunit and ribosome. Forms part of the polypeptide exit tunnel. In Shouchella clausii (strain KSM-K16) (Alkalihalobacillus clausii), this protein is Large ribosomal subunit protein uL4.